The following is a 141-amino-acid chain: Hemoglobin subunit alpha (141 aa).

The Globin domain maps to 1-141 (VLSPDDKKHV…VSTVLTSKYR (141 aa)). S3 carries the post-translational modification Phosphoserine. N6-succinyllysine occurs at positions 7 and 11. The residue at position 16 (K16) is an N6-acetyllysine; alternate. N6-succinyllysine; alternate is present on K16. Y24 is modified (phosphotyrosine). Residue S35 is modified to Phosphoserine. The residue at position 40 (K40) is an N6-succinyllysine. The residue at position 49 (S49) is a Phosphoserine. H58 is an O2 binding site. Residue H87 coordinates heme b. S102 carries the post-translational modification Phosphoserine. T108 bears the Phosphothreonine mark. S124 and S131 each carry phosphoserine. Residues T134 and T137 each carry the phosphothreonine modification. S138 bears the Phosphoserine mark.

The protein belongs to the globin family. Heterotetramer of two alpha chains and two beta chains. As to expression, red blood cells.

Its function is as follows. Involved in oxygen transport from the lung to the various peripheral tissues. Hemopressin acts as an antagonist peptide of the cannabinoid receptor CNR1. Hemopressin-binding efficiently blocks cannabinoid receptor CNR1 and subsequent signaling. This chain is Hemoglobin subunit alpha (HBA), found in Cercocebus atys (Sooty mangabey).